The chain runs to 1426 residues: DNA-directed RNA polymerase subunit beta' (1426 aa).

4 residues coordinate Zn(2+): cysteine 71, cysteine 73, cysteine 86, and cysteine 89. The Mg(2+) site is built by aspartate 461, aspartate 463, and aspartate 465. The Zn(2+) site is built by cysteine 814, cysteine 888, cysteine 895, and cysteine 898. The segment at alanine 1392–glycine 1426 is disordered.

The protein belongs to the RNA polymerase beta' chain family. As to quaternary structure, the RNAP catalytic core consists of 2 alpha, 1 beta, 1 beta' and 1 omega subunit. When a sigma factor is associated with the core the holoenzyme is formed, which can initiate transcription. It depends on Mg(2+) as a cofactor. Zn(2+) is required as a cofactor.

The catalysed reaction is RNA(n) + a ribonucleoside 5'-triphosphate = RNA(n+1) + diphosphate. Its function is as follows. DNA-dependent RNA polymerase catalyzes the transcription of DNA into RNA using the four ribonucleoside triphosphates as substrates. The protein is DNA-directed RNA polymerase subunit beta' of Alkalilimnicola ehrlichii (strain ATCC BAA-1101 / DSM 17681 / MLHE-1).